A 177-amino-acid chain; its full sequence is Putative adenylate kinase (177 aa).

Residues Gly10, Gly12, Lys13, Thr14, and Thr15 each contribute to the ATP site. Residues 30-53 (DITEAVKKYKLYTEKDEDMDSYVI) are NMP. The segment at 103-113 (KRGYKPKKVLE) is LID. Arg104 serves as a coordination point for ATP.

The protein belongs to the adenylate kinase family. AK6 subfamily. In terms of assembly, interacts with uS11. Not a structural component of 40S pre-ribosomes, but transiently interacts with them by binding to uS11.

The enzyme catalyses AMP + ATP = 2 ADP. It catalyses the reaction ATP + H2O = ADP + phosphate + H(+). In terms of biological role, broad-specificity nucleoside monophosphate (NMP) kinase that catalyzes the reversible transfer of the terminal phosphate group between nucleoside triphosphates and monophosphates. Also has ATPase activity. Involved in the late maturation steps of the 30S ribosomal particles, specifically 16S rRNA maturation. While NMP activity is not required for ribosome maturation, ATPase activity is. Associates transiently with small ribosomal subunit protein uS11. ATP hydrolysis breaks the interaction with uS11. May temporarily remove uS11 from the ribosome to enable a conformational change of the ribosomal RNA that is needed for the final maturation step of the small ribosomal subunit. The sequence is that of Putative adenylate kinase from Methanocaldococcus jannaschii (strain ATCC 43067 / DSM 2661 / JAL-1 / JCM 10045 / NBRC 100440) (Methanococcus jannaschii).